We begin with the raw amino-acid sequence, 1583 residues long: MEAQAHSSTATERKKAENSIGKCPTRTDVSEKAVASSTTSNEDESPGQIYHRERRNAITMQPQSVQGLNKISEEPSTSSDERASLIKKEIHGSLPHLAEPSLPYRGTVFAMDPRNGYMEPHYHPPHLFPAFHPPVPIDARHHEGRYHYDPSPIPPLHVPSALSSSPTYPDLPFIRISPHRNPTAASESPFSPPHPYINPYMDYIRSLHSSPSLSMISAARGLSPTDAPHAGVSPAEYYHQMALLTGQRSPYADILPSAATAGAGAIHMEYLHAMDSTRFPSPRLSARPSRKRTLSISPLSDHSFDLQTMIRTSPNSLVTILNNSRSSSSASGSYGHLSASAISPALSFTYPSAPVSLHMHQQILSRQQSLGSAFGHSPPLIHPAPTFPTQRPIPGIPTVLNPVQVSSGPSESSQSKPTSESAVSSTGDPMHNKRSKIKPDEDLPSPGSRGQQEQPEGTTLVKEEADKDESKQEPEVIYETNCHWEGCTREFDTQDQLVHHINNDHIHGEKKEFVCRWLDCSREQKPFKAQYMLVVHMRRHTGEKPHKCTFEGCTKAYSRLENLKTHLRSHTGEKPYVCEHEGCNKAFSNASDRAKHQNRTHSNEKPYVCKIPGCTKRYTDPSSLRKHVKTVHGPEAHVTKKQRGDMHPRPPPPRDSGSHSQSRSPGRPTQGAFGEQKELSNTTSKREECLQVKTVKAEKPMTSQPSPGGQSSCSSQQSPISNYSNSGLELPLTDGGSVADLSAIDETPIMDSTISTATTALALQARRNPAGTKWMEHIKLERLKQVNGMFPRLNPILPSKAPAVSPLIGNGTQSNNNYSSGGPGTLLPSRSDLSGVDFTVLNTLNRRDSNTSTISSAYLSSRRSSGISPCFSSRRSSEASQAEGRPQNVSVADSYDPISTDASRRSSEASQGDGLPSLLSLTPVQQYRLKAKYAAATGGPPPTPLPHMERLSLKTKMALLGEGRDSGVTLPPVHPPRRCSDGGGHTYRGRHLMPHDALANSVRRASDPVRTVSENMSLARVQRFSSLNSFNPPNLPPSVEKRSLVLQNYTRQESSQPRYFQASPCPPSITENVALEALTMDADANLNDEDLLPDDVVQYLNSQNQTGYGQQLQSGISEDSKVAHEPEDLDLAGLPDSHVGQEYPALEQPCSEGSKTDLPIQWNEVSSGTSDLSSSKLKCGQQRPSAQQPRGFGLYNNMVVHPHNLWKVGTGPAGGYQTLGENSSTYNGPEHFAIHSGDGLGTNGNTFHEQPFKTQQYGSQLNRQPLTSSALDHACGTGIQGSKLKGNSLQENGGLLDFSLSVAPNELAGNTVNGMQTQDQMGQGYIAHQLLSGSMQHQGPSRPGQQVLGQVGATSHINIYQGTESCLPGTQDNSSQPSSMAAIRGYQPCASYGGNRRQAMPRGNLTLQQGQLSDMSQSSRVNSIKMEAQGQSQQLCSTVQNYSGQFYDQTMGFSQQDRKAGSFSLSDANCLLQGNGTENSELLSPGANQVTSTVDSFESHDLEGVQIDFDAIIDDGDHTSLMSGALSPSIIQNLSHSSSRLTTPRASLPFPSLSMGTTNMAIGDMSSLLTSLAEESKFLAVMQ.

Residue Met-1 is modified to N-acetylmethionine. Polar residues-rich tracts occupy residues 1-10 (MEAQAHSSTA) and 58-78 (ITMQPQSVQGLNKISEEPSTS). Positions 1 to 78 (MEAQAHSSTA…NKISEEPSTS (78 aa)) are disordered. Arg-175 bears the Omega-N-methylarginine mark. The disordered stretch occupies residues 368–475 (QSLGSAFGHS…DKDESKQEPE (108 aa)). Residues 403 to 421 (VQVSSGPSESSQSKPTSES) are compositionally biased toward low complexity. A Glycyl lysine isopeptide (Lys-Gly) (interchain with G-Cter in SUMO2) cross-link involves residue Lys-438. Polar residues predominate over residues 448–457 (SRGQQEQPEG). Over residues 461–474 (VKEEADKDESKQEP) the composition is skewed to basic and acidic residues. A Glycyl lysine isopeptide (Lys-Gly) (interchain with G-Cter in SUMO2) cross-link involves residue Lys-462. 5 C2H2-type zinc fingers span residues 480-505 (TNCHWEGCTREFDTQDQLVHHINNDH), 513-540 (FVCRWLDCSREQKPFKAQYMLVVHMRRH), 546-570 (HKCTFEGCTKAYSRLENLKTHLRSH), 576-601 (YVCEHEGCNKAFSNASDRAKHQNRTH), and 607-632 (YVCKIPGCTKRYTDPSSLRKHVKTVH). A disordered region spans residues 620–728 (DPSSLRKHVK…PISNYSNSGL (109 aa)). Basic and acidic residues predominate over residues 632–648 (HGPEAHVTKKQRGDMHP). Ser-664 carries the phosphoserine modification. Residues 684–699 (SKREECLQVKTVKAEK) are compositionally biased toward basic and acidic residues. A compositionally biased stretch (low complexity) spans 703 to 726 (SQPSPGGQSSCSSQQSPISNYSNS). A mediates interaction with DZIP1 region spans residues 745–845 (DETPIMDSTI…VDFTVLNTLN (101 aa)). A Glycyl lysine isopeptide (Lys-Gly) (interchain with G-Cter in ubiquitin) cross-link involves residue Lys-773. Residue Lys-779 forms a Glycyl lysine isopeptide (Lys-Gly) (interchain with G-Cter in SUMO2); alternate linkage. Lys-779 is covalently cross-linked (Glycyl lysine isopeptide (Lys-Gly) (interchain with G-Cter in ubiquitin); alternate). Residues Lys-784 and Lys-800 each participate in a glycyl lysine isopeptide (Lys-Gly) (interchain with G-Cter in ubiquitin) cross-link. The interval 809-828 (GNGTQSNNNYSSGGPGTLLP) is disordered. Residues 810 to 820 (NGTQSNNNYSS) are compositionally biased toward polar residues. Phosphoserine; by PKA is present on residues Ser-849, Ser-865, Ser-877, Ser-907, Ser-980, and Ser-1006. Positions 863–880 (RSSGISPCFSSRRSSEAS) are enriched in low complexity. The interval 863 to 918 (RSSGISPCFSSRRSSEASQAEGRPQNVSVADSYDPISTDASRRSSEASQGDGLPSL) is disordered. Residues 1164–1189 (EVSSGTSDLSSSKLKCGQQRPSAQQP) are disordered. A compositionally biased stretch (low complexity) spans 1166-1175 (SSGTSDLSSS).

This sequence belongs to the GLI C2H2-type zinc-finger protein family. The phosphorylated form interacts with BTRC. The full-length GLI3 form (GLI3FL) interacts with SUFU and this interaction regulates the formation of either repressor or activator forms of GLI3. Its association with SUFU is regulated by Hh signaling and dissociation of the SUFU-GLI3 interaction requires the presence of the ciliary motor KIF3A. Interacts with KIF7. The activator form of GLI3 (GLI3A) but not the repressor form (GLI3R) can interact with TRPS1. Interacts with ZIC1. Interacts with ZIC3 (via C2H2-type domains 3, 4 and 5); the interaction enhances its transcriptional activity. Interacts with WRD11; the interaction associates EMX1 with GLI3. Interacts with DZIP1; retains GLI3 within the cytoplasm. Phosphorylated by DYRK2 (in vitro). Phosphorylated on multiple sites by protein kinase A (PKA) and phosphorylation by PKA primes further phosphorylation by CK1 and GSK3. Phosphorylation is essential for its proteolytic processing. In terms of processing, transcriptional repressor GLI3R, a C-terminally truncated form, is generated from the full-length GLI3 protein (GLI3FL/GLI3-190) through proteolytic processing. This process requires PKA-primed phosphorylation of GLI3, ubiquitination of GLI3 and the presence of BTRC. GLI3FL is complexed with SUFU in the cytoplasm and is maintained in a neutral state. Without the Hh signal, the SUFU-GLI3 complex is recruited to cilia, leading to the efficient processing of GLI3FL into GLI3R. GLI3R formation leads to its dissociation from SUFU, allowing it to translocate into the nucleus, and repress Hh target genes. When Hh signaling is initiated, SUFU dissociates from GLI3FL and this has two consequences. First, GLI3R production is halted. Second, free GLI3FL translocates to the nucleus, where it is phosphorylated, destabilized, and converted to a transcriptional activator (GLI3A). Phosphorylated in vitro by ULK3.

Its subcellular location is the nucleus. It is found in the cytoplasm. The protein resides in the cell projection. It localises to the cilium. Functionally, has a dual function as a transcriptional activator and a repressor of the sonic hedgehog (Shh) pathway, and plays a role in limb development. The full-length GLI3 form (GLI3FL) after phosphorylation and nuclear translocation, acts as an activator (GLI3A) while GLI3R, its C-terminally truncated form, acts as a repressor. A proper balance between the GLI3 activator and the repressor GLI3R, rather than the repressor gradient itself or the activator/repressor ratio gradient, specifies limb digit number and identity. In concert with TRPS1, plays a role in regulating the size of the zone of distal chondrocytes, in restricting the zone of PTHLH expression in distal cells and in activating chondrocyte proliferation. Binds to the minimal GLI-consensus sequence 5'-GGGTGGTC-3'. This Mus musculus (Mouse) protein is Transcriptional activator GLI3 (Gli3).